A 366-amino-acid polypeptide reads, in one-letter code: Aminomethyltransferase (366 aa).

Belongs to the GcvT family. In terms of assembly, the glycine cleavage system is composed of four proteins: P, T, L and H.

It carries out the reaction N(6)-[(R)-S(8)-aminomethyldihydrolipoyl]-L-lysyl-[protein] + (6S)-5,6,7,8-tetrahydrofolate = N(6)-[(R)-dihydrolipoyl]-L-lysyl-[protein] + (6R)-5,10-methylene-5,6,7,8-tetrahydrofolate + NH4(+). Functionally, the glycine cleavage system catalyzes the degradation of glycine. In Bordetella pertussis (strain Tohama I / ATCC BAA-589 / NCTC 13251), this protein is Aminomethyltransferase.